A 301-amino-acid chain; its full sequence is Prohibitin-2 (301 aa).

2 necessary for transcriptional repression regions span residues 19 to 49 (VGTA…GQRA) and 150 to 174 (ASQL…RAKD). The stretch at 190 to 237 (SREYTAAVEAKQVAQQEAQRAQFLVEKAKQEQKQKIVQAEGEATAAKM) forms a coiled coil.

It belongs to the prohibitin family. The mitochondrial prohibitin complex consists of two subunits (PHB1 and PHB2), assembled into a membrane-associated ring-shaped supercomplex of approximately 1 mDa.

Its subcellular location is the mitochondrion inner membrane. The protein localises to the cytoplasm. The protein resides in the nucleus. It is found in the cell membrane. Functionally, protein with pleiotropic attributes mediated in a cell-compartment- and tissue-specific manner, which include the plasma membrane-associated cell signaling functions, mitochondrial chaperone, and transcriptional co-regulator of transcription factors and sex steroid hormones in the nucleus. In the mitochondria, together with PHB, forms large ring complexes (prohibitin complexes) in the inner mitochondrial membrane (IMM) and functions as a chaperone protein that stabilizes mitochondrial respiratory enzymes and maintains mitochondrial integrity in the IMM, which is required for mitochondrial morphogenesis, neuronal survival, and normal lifespan. In terms of biological role, in the nucleus, serves as transcriptional co-regulator. The sequence is that of Prohibitin-2 (PHB2) from Gallus gallus (Chicken).